Consider the following 309-residue polypeptide: UDP-N-acetylenolpyruvoylglucosamine reductase (309 aa).

Positions 33–198 constitute an FAD-binding PCMH-type domain; the sequence is RVGGPAQVLF…TSARFRGTPA (166 aa). Residue Arg178 is part of the active site. The active-site Proton donor is the Ser227. Glu297 is a catalytic residue.

Belongs to the MurB family. It depends on FAD as a cofactor.

It localises to the cytoplasm. The enzyme catalyses UDP-N-acetyl-alpha-D-muramate + NADP(+) = UDP-N-acetyl-3-O-(1-carboxyvinyl)-alpha-D-glucosamine + NADPH + H(+). Its pathway is cell wall biogenesis; peptidoglycan biosynthesis. Its function is as follows. Cell wall formation. This Rhodopseudomonas palustris (strain HaA2) protein is UDP-N-acetylenolpyruvoylglucosamine reductase.